A 277-amino-acid chain; its full sequence is Carbonyl reductase [NADPH] 1 (277 aa).

NADP(+) contacts are provided by residues 10–34, 63–64, and N90; these read VTGS…GEVV and DI. Phosphoserine is present on S30. Glutathione-binding positions include 95-97 and Q106; that span reads FKV. S140 contacts substrate. 193–194 is a glutathione binding site; that stretch reads AY. The active-site Proton acceptor is the Y194. NADP(+) is bound by residues 194–198 and 231–233; these read YGVTK and VRT.

The protein belongs to the short-chain dehydrogenases/reductases (SDR) family. Monomer.

The protein localises to the cytoplasm. It catalyses the reaction a secondary alcohol + NADP(+) = a ketone + NADPH + H(+). The enzyme catalyses prostaglandin F2alpha + NADP(+) = prostaglandin E2 + NADPH + H(+). The catalysed reaction is prostaglandin E1 + NADP(+) = 15-oxoprostaglandin E1 + NADPH + H(+). It carries out the reaction prostaglandin D2 + NADP(+) = 15-oxoprostaglandin D2 + NADPH + H(+). It catalyses the reaction menadione + NADPH + H(+) = menadiol + NADP(+). The enzyme catalyses prostaglandin E2 + NADP(+) = 15-oxoprostaglandin E2 + NADPH + H(+). The catalysed reaction is prostaglandin F2alpha + NADP(+) = 15-oxoprostaglandin F2alpha + NADPH + H(+). It carries out the reaction daunorubicin + NADPH + H(+) = 13-dihydrodaunorubicin + NADP(+). It catalyses the reaction S-nitrosoglutathione + NADPH + H(+) = S-(hydroxysulfenamide)glutathione + NADP(+). The enzyme catalyses a primary alcohol + NADP(+) = an aldehyde + NADPH + H(+). The catalysed reaction is cortisol + NADPH + H(+) = 20beta-dihydrocortisol + NADP(+). It carries out the reaction corticosterone + NADPH + H(+) = 20beta-dihydrocorticosterone + NADP(+). Functionally, NADPH-dependent reductase with broad substrate specificity. Catalyzes the reduction of a wide variety of carbonyl compounds including quinones, prostaglandins, menadione, plus various xenobiotics. Catalyzes the reduction of the antitumor anthracyclines doxorubicin and daunorubicin to the cardiotoxic compounds doxorubicinol and daunorubicinol. Can convert prostaglandin E to prostaglandin F2-alpha. Can bind glutathione, which explains its higher affinity for glutathione-conjugated substrates. Catalyzes the reduction of S-nitrosoglutathione. In addition, participates in the glucocorticoid metabolism by catalyzing the NADPH-dependent cortisol/corticosterone into 20beta-dihydrocortisol (20b-DHF) or 20beta-corticosterone (20b-DHB), which are weak agonists of NR3C1 and NR3C2 in adipose tissue. The sequence is that of Carbonyl reductase [NADPH] 1 from Macaca fascicularis (Crab-eating macaque).